We begin with the raw amino-acid sequence, 61 residues long: Metallothionein-1A (61 aa).

At Met-1 the chain carries N-acetylmethionine. The segment at 1-29 (MDPNCSCPTGGSCSCAGSCTCKACRCPSC) is beta. The a divalent metal cation site is built by Cys-5, Cys-7, Cys-13, Cys-15, Cys-19, Cys-21, Cys-24, Cys-26, Cys-29, Cys-33, Cys-34, Cys-36, Cys-37, Cys-41, Cys-44, Cys-48, Cys-50, and Cys-57. Residues 30-61 (KKSCCSCCPVGCAKCAQGCVCKGASDKCSCCA) are alpha. Residue Ser-58 is modified to Phosphoserine. Residues Cys-59 and Cys-60 each contribute to the a divalent metal cation site.

This sequence belongs to the metallothionein superfamily. Type 1 family. Monomer.

Functionally, metallothioneins have a high content of cysteine residues that bind various heavy metals; these proteins are transcriptionally regulated by both heavy metals and glucocorticoids. The chain is Metallothionein-1A (MT1A) from Bos taurus (Bovine).